The sequence spans 381 residues: Queuine tRNA-ribosyltransferase (381 aa).

The Proton acceptor role is filled by Asp92. Substrate contacts are provided by residues 92-96 (DSGGF), Asp146, Gln190, and Gly217. The interval 248–254 (GVGRPED) is RNA binding. The active-site Nucleophile is Asp267. Residues 272-276 (TRNAR) form an RNA binding; important for wobble base 34 recognition region. Zn(2+) contacts are provided by Cys305, Cys307, Cys310, and His337.

It belongs to the queuine tRNA-ribosyltransferase family. As to quaternary structure, homodimer. Within each dimer, one monomer is responsible for RNA recognition and catalysis, while the other monomer binds to the replacement base PreQ1. The cofactor is Zn(2+).

It catalyses the reaction 7-aminomethyl-7-carbaguanine + guanosine(34) in tRNA = 7-aminomethyl-7-carbaguanosine(34) in tRNA + guanine. Its pathway is tRNA modification; tRNA-queuosine biosynthesis. Its function is as follows. Catalyzes the base-exchange of a guanine (G) residue with the queuine precursor 7-aminomethyl-7-deazaguanine (PreQ1) at position 34 (anticodon wobble position) in tRNAs with GU(N) anticodons (tRNA-Asp, -Asn, -His and -Tyr). Catalysis occurs through a double-displacement mechanism. The nucleophile active site attacks the C1' of nucleotide 34 to detach the guanine base from the RNA, forming a covalent enzyme-RNA intermediate. The proton acceptor active site deprotonates the incoming PreQ1, allowing a nucleophilic attack on the C1' of the ribose to form the product. After dissociation, two additional enzymatic reactions on the tRNA convert PreQ1 to queuine (Q), resulting in the hypermodified nucleoside queuosine (7-(((4,5-cis-dihydroxy-2-cyclopenten-1-yl)amino)methyl)-7-deazaguanosine). The protein is Queuine tRNA-ribosyltransferase of Xanthomonas campestris pv. campestris (strain 8004).